We begin with the raw amino-acid sequence, 367 residues long: HTH-type transcriptional regulator GbdR (367 aa).

The 99-residue stretch at 227–325 (QEIVALMEAN…GIPPRDERQG (99 aa)) folds into the HTH araC/xylS-type domain. DNA-binding regions (H-T-H motif) lie at residues 244 to 265 (DELA…QKYL) and 292 to 315 (IIEV…REYF).

Specific regulator of choline metabolism, which activates transcription of at least 25 genes from 11 promoters in response to choline metabolites. Required for the induction of plcH, encoding the phospholipase C, and pchP, encoding the phosphorylcholine phosphatase, in response to glycine betaine (GB) and dimethylglycine (DMG). Also controls the expression of gbcAB and dgcAB, which are required for GB and DMG degradation, respectively, in response to both GB and DMG. The GbdR regulon also includes genes encoding sarcosine, glycine and serine catabolic enzymes, the BetX and CbcXWV quaternary amine transport proteins and the acetylcholine esterase gene, choE. Acts by binding directly to the promoter region of the genes. May play an important role during P.aeruginosa interactions with eukaryotes. The sequence is that of HTH-type transcriptional regulator GbdR from Pseudomonas aeruginosa (strain UCBPP-PA14).